Reading from the N-terminus, the 244-residue chain is 5-oxoprolinase subunit A (244 aa).

This sequence belongs to the LamB/PxpA family. In terms of assembly, forms a complex composed of PxpA, PxpB and PxpC.

The enzyme catalyses 5-oxo-L-proline + ATP + 2 H2O = L-glutamate + ADP + phosphate + H(+). Catalyzes the cleavage of 5-oxoproline to form L-glutamate coupled to the hydrolysis of ATP to ADP and inorganic phosphate. The polypeptide is 5-oxoprolinase subunit A (Escherichia coli (strain K12)).